The sequence spans 330 residues: Calponin-3 (330 aa).

N6-acetyllysine is present on K23. The region spanning 26–130 is the Calponin-homology (CH) domain; that stretch reads QQAEEDLRNW…TLVALAGLAK (105 aa). At K158 the chain carries N6-methyllysine. 3 Calponin-like repeats span residues 164 to 189, 204 to 229, and 243 to 268; these read IGLQ…RHLY, ISLQ…RDIY, and ISLQ…RQVY. Residues 279–330 are disordered; sequence PVIHNGSQGTGTNGSEISDSDYQAEYPDEYHGEYPDEYPREYQYGDDQGIDY. The span at 306–318 shows a compositional bias: basic and acidic residues; sequence DEYHGEYPDEYPR.

This sequence belongs to the calponin family.

Functionally, thin filament-associated protein that is implicated in the regulation and modulation of smooth muscle contraction. It is capable of binding to actin, calmodulin and tropomyosin. The interaction of calponin with actin inhibits the actomyosin Mg-ATPase activity. The sequence is that of Calponin-3 (Cnn3) from Rattus norvegicus (Rat).